Here is a 223-residue protein sequence, read N- to C-terminus: NLP effector protein 2 (223 aa).

The short motif at 90–100 is the Conserved undecapeptide motif element; the sequence is AIMYSWYFPKD. Residues 107–113 carry the Conserved p motif motif; the sequence is GHRHDWE.

This sequence belongs to the Necrosis inducing protein (NPP1) family.

It localises to the secreted. The protein localises to the host cytoplasm. In terms of biological role, probable secreted effector that may act as a pathogen-associated molecular pattern (PAMP) recognized by the plant immune system. Seems not to induce necrosis, neither in several susceptible or resistant Vitis species nor in the dicot model plant Nicotiana benthamiana. This chain is NLP effector protein 2, found in Plasmopara viticola (Downy mildew of grapevine).